Consider the following 408-residue polypeptide: MLEVYLGVGMFTAIVLVLVLVILFAKSKLVASGDIIIGINGDADKAITTGAGGKLLSVLADNGIFVSSACGGGGSCGQCRVNIKSGGGDILPTELDHISKGEARGGCRLSCQVNVKSDMEIELDEEIFGIKKWECDVISNDNKATFIKELKLQIPDGESVPFRAGGYIQIEAPAHHVKYADFDVPAKYRGDWEHFGFFKLESKVDEETIRAYSMANYPEEFGIIMLNVRIATPPPRNLSLPCGKMSSYIWSLKAGDKVTISGPFGEFFAKDTDAEMVFIGGGAGMAPMRSHLFDQLKRLKSKRKMSFWYGARSKREMFYVEDFDGLAAENENFQWHVALSDPQAEDEWTGYTGFIHNVLYENYLRDHDAPEDCEFYMCGPPMMNAAVISMLKDLGVEDENILLDDFGG.

A helical membrane pass occupies residues 4–24 (VYLGVGMFTAIVLVLVLVILF). In terms of domain architecture, 2Fe-2S ferredoxin-type spans 33-127 (GDIIIGINGD…DMEIELDEEI (95 aa)). [2Fe-2S] cluster is bound by residues C70, C76, C79, and C111. Positions 130-270 (IKKWECDVIS…SGPFGEFFAK (141 aa)) constitute an FAD-binding FR-type domain.

It belongs to the NqrF family. In terms of assembly, composed of six subunits; NqrA, NqrB, NqrC, NqrD, NqrE and NqrF. The cofactor is [2Fe-2S] cluster. It depends on FAD as a cofactor.

It is found in the cell inner membrane. It carries out the reaction a ubiquinone + n Na(+)(in) + NADH + H(+) = a ubiquinol + n Na(+)(out) + NAD(+). Its function is as follows. NQR complex catalyzes the reduction of ubiquinone-1 to ubiquinol by two successive reactions, coupled with the transport of Na(+) ions from the cytoplasm to the periplasm. The first step is catalyzed by NqrF, which accepts electrons from NADH and reduces ubiquinone-1 to ubisemiquinone by a one-electron transfer pathway. The chain is Na(+)-translocating NADH-quinone reductase subunit F from Shewanella denitrificans (strain OS217 / ATCC BAA-1090 / DSM 15013).